The primary structure comprises 339 residues: DNA-directed RNA polymerase subunit alpha (339 aa).

Residues 1-233 (MVREEVAGST…DLFLPFLHAE (233 aa)) are alpha N-terminal domain (alpha-NTD). The segment at 264–339 (KKGIPLNCIF…IDLLKNKLSF (76 aa)) is alpha C-terminal domain (alpha-CTD).

It belongs to the RNA polymerase alpha chain family. In terms of assembly, in plastids the minimal PEP RNA polymerase catalytic core is composed of four subunits: alpha, beta, beta', and beta''. When a (nuclear-encoded) sigma factor is associated with the core the holoenzyme is formed, which can initiate transcription.

The protein resides in the plastid. It is found in the chloroplast. It catalyses the reaction RNA(n) + a ribonucleoside 5'-triphosphate = RNA(n+1) + diphosphate. In terms of biological role, DNA-dependent RNA polymerase catalyzes the transcription of DNA into RNA using the four ribonucleoside triphosphates as substrates. This chain is DNA-directed RNA polymerase subunit alpha, found in Agropyron cristatum (Crested wheatgrass).